The sequence spans 397 residues: Tryptophan synthase beta chain (397 aa).

Lysine 87 bears the N6-(pyridoxal phosphate)lysine mark.

The protein belongs to the TrpB family. In terms of assembly, tetramer of two alpha and two beta chains. It depends on pyridoxal 5'-phosphate as a cofactor.

It catalyses the reaction (1S,2R)-1-C-(indol-3-yl)glycerol 3-phosphate + L-serine = D-glyceraldehyde 3-phosphate + L-tryptophan + H2O. Its pathway is amino-acid biosynthesis; L-tryptophan biosynthesis; L-tryptophan from chorismate: step 5/5. The beta subunit is responsible for the synthesis of L-tryptophan from indole and L-serine. This is Tryptophan synthase beta chain from Shigella boydii serotype 18 (strain CDC 3083-94 / BS512).